Reading from the N-terminus, the 363-residue chain is uncharacterized protein (363 aa).

Residues 109–329 (RAALRELRSR…VEELQAQTRE (221 aa)) adopt a coiled-coil conformation.

This is an uncharacterized protein from Homo sapiens (Human).